The following is a 227-amino-acid chain: Thymidylate kinase (227 aa).

Position 16-23 (16-23 (GIDGAGKT)) interacts with ATP.

Belongs to the thymidylate kinase family.

The enzyme catalyses dTMP + ATP = dTDP + ADP. Phosphorylation of dTMP to form dTDP in both de novo and salvage pathways of dTTP synthesis. This chain is Thymidylate kinase, found in Xanthomonas campestris pv. campestris (strain 8004).